We begin with the raw amino-acid sequence, 137 residues long: Basic phospholipase A2 homolog MT1 (137 aa).

The N-terminal stretch at 1 to 16 (MRTLWIVALLLVGVEG) is a signal peptide. 7 disulfides stabilise this stretch: cysteine 42–cysteine 131, cysteine 44–cysteine 60, cysteine 59–cysteine 111, cysteine 65–cysteine 137, cysteine 66–cysteine 104, cysteine 73–cysteine 97, and cysteine 91–cysteine 102. Positions 121-133 (KKYKAYFKFKCKK) are important for membrane-damaging activities in eukaryotes and bacteria; heparin-binding.

It belongs to the phospholipase A2 family. Group II subfamily. K49 sub-subfamily. In terms of assembly, binds to heparin. In terms of tissue distribution, expressed by the venom gland.

It is found in the secreted. With respect to regulation, heparin and wedelolactone inhibit the myotoxic activity. The PLA2 inhibitor, para-bromophenacyl bromide (BPB), inhibits the myotoxic activity. Snake venom phospholipase A2 homolog that lacks enzymatic activity. Has myotoxic activities. A model of myotoxic mechanism has been proposed: an apo Lys49-PLA2 is activated by the entrance of a hydrophobic molecule (e.g. fatty acid) at the hydrophobic channel of the protein leading to a reorientation of a monomer. This reorientation causes a transition between 'inactive' to 'active' states, causing alignment of C-terminal and membrane-docking sites (MDoS) side-by-side and putting the membrane-disruption sites (MDiS) in the same plane, exposed to solvent and in a symmetric position for both monomers. The MDoS region stabilizes the toxin on membrane by the interaction of charged residues with phospholipid head groups. Subsequently, the MDiS region destabilizes the membrane with penetration of hydrophobic residues. This insertion causes a disorganization of the membrane, allowing an uncontrolled influx of ions (i.e. calcium and sodium), and eventually triggering irreversible intracellular alterations and cell death. In Agkistrodon contortrix laticinctus (Broad-banded copperhead), this protein is Basic phospholipase A2 homolog MT1.